The chain runs to 386 residues: WD repeat-containing protein 89 (386 aa).

6 WD repeats span residues 21–65, 68–107, 112–156, 167–207, 213–253, and 318–357; these read KEPT…LLRE, GSPG…EKPV, GYPS…QDLS, THSD…EEDA, NSVS…TDEP, and GHAA…KTFT.

This chain is WD repeat-containing protein 89 (Wdr89), found in Mus musculus (Mouse).